The following is a 358-amino-acid chain: 3-isopropylmalate dehydrogenase 2 (358 aa).

74-87 contacts NAD(+); the sequence is GPKWDKLPAESRPE. 4 residues coordinate substrate: arginine 94, arginine 104, arginine 132, and aspartate 221. Mg(2+) contacts are provided by aspartate 221, aspartate 245, and aspartate 249. 279 to 291 contacts NAD(+); the sequence is GSAPDIAGQGVAN.

Belongs to the isocitrate and isopropylmalate dehydrogenases family. LeuB type 1 subfamily. Homodimer. Mg(2+) is required as a cofactor. The cofactor is Mn(2+).

The protein localises to the cytoplasm. It carries out the reaction (2R,3S)-3-isopropylmalate + NAD(+) = 4-methyl-2-oxopentanoate + CO2 + NADH. Its pathway is amino-acid biosynthesis; L-leucine biosynthesis; L-leucine from 3-methyl-2-oxobutanoate: step 3/4. Catalyzes the oxidation of 3-carboxy-2-hydroxy-4-methylpentanoate (3-isopropylmalate) to 3-carboxy-4-methyl-2-oxopentanoate. The product decarboxylates to 4-methyl-2 oxopentanoate. The protein is 3-isopropylmalate dehydrogenase 2 of Dechloromonas aromatica (strain RCB).